Consider the following 270-residue polypeptide: Glucosamine-6-phosphate deaminase (270 aa).

Aspartate 72 functions as the Proton acceptor; for enolization step in the catalytic mechanism. Aspartate 141 (for ring-opening step) is an active-site residue. Histidine 143 serves as the catalytic Proton acceptor; for ring-opening step. Glutamate 148 (for ring-opening step) is an active-site residue.

Belongs to the glucosamine/galactosamine-6-phosphate isomerase family. NagB subfamily. In terms of assembly, homohexamer.

The enzyme catalyses alpha-D-glucosamine 6-phosphate + H2O = beta-D-fructose 6-phosphate + NH4(+). It participates in amino-sugar metabolism; N-acetylneuraminate degradation; D-fructose 6-phosphate from N-acetylneuraminate: step 5/5. Allosterically activated by N-acetylglucosamine 6-phosphate (GlcNAc6P). Functionally, catalyzes the reversible isomerization-deamination of glucosamine 6-phosphate (GlcN6P) to form fructose 6-phosphate (Fru6P) and ammonium ion. The polypeptide is Glucosamine-6-phosphate deaminase (Photorhabdus laumondii subsp. laumondii (strain DSM 15139 / CIP 105565 / TT01) (Photorhabdus luminescens subsp. laumondii)).